The chain runs to 303 residues: Glutamyl-Q tRNA(Asp) synthetase (303 aa).

L-glutamate contacts are provided by residues 9 to 13 (RFAPS) and E45. The 'HIGH' region motif lies at 12–22 (PSPSGSLHFGS). Zn(2+) is bound by residues C101, C103, Y115, and C119. The L-glutamate site is built by Y172 and R190. A 'KMSKS' region motif is present at residues 228–232 (KLSKQ). K231 lines the ATP pocket.

It belongs to the class-I aminoacyl-tRNA synthetase family. GluQ subfamily. It depends on Zn(2+) as a cofactor.

Catalyzes the tRNA-independent activation of glutamate in presence of ATP and the subsequent transfer of glutamate onto a tRNA(Asp). Glutamate is transferred on the 2-amino-5-(4,5-dihydroxy-2-cyclopenten-1-yl) moiety of the queuosine in the wobble position of the QUC anticodon. The sequence is that of Glutamyl-Q tRNA(Asp) synthetase from Serratia proteamaculans (strain 568).